A 464-amino-acid chain; its full sequence is Sugar transporter ERD6-like 1 (464 aa).

12 helical membrane passes run 23–43 (ITCG…VYGC), 72–92 (VMTL…AVIG), 95–115 (QTMW…AFAH), 125–145 (GFLG…IAEI), 156–176 (FSNQ…GNFF), 180–200 (TLAL…FFIP), 263–283 (LIIG…AISA), 298–318 (IGTS…MFAV), 326–346 (LLMS…LSYY), 359–379 (PILI…LGGL), 399–419 (LVTV…NFMM), and 424–444 (FGTY…VWTL).

Belongs to the major facilitator superfamily. Sugar transporter (TC 2.A.1.1) family.

It is found in the membrane. Sugar transporter. The protein is Sugar transporter ERD6-like 1 (SUGTL4) of Arabidopsis thaliana (Mouse-ear cress).